The following is a 282-amino-acid chain: uncharacterized protein (282 aa).

In terms of domain architecture, HTH rpiR-type spans 1-77 (MNGLLRIRQR…LALSEALASQ (77 aa)). Residues 37 to 56 (SQQLANEAGVSQSSVVKFAQ) constitute a DNA-binding region (H-T-H motif). Residues 125 to 265 (CVTMLRSARR…FIALIQQDLE (141 aa)) enclose the SIS domain.

This is an uncharacterized protein from Escherichia coli (strain K12).